Reading from the N-terminus, the 535-residue chain is Berberine bridge enzyme-like 3 (535 aa).

The signal sequence occupies residues 1–19 (MKEALFGLYLVLLVSGLEA). A disulfide bridge connects residues C32 and C95. The N-linked (GlcNAc...) asparagine glycan is linked to N52. Positions 73–247 (NNKNLLAIVV…LSWKINLVEV (175 aa)) constitute an FAD-binding PCMH-type domain. A cross-link (6-(S-cysteinyl)-8alpha-(pros-histidyl)-FAD (His-Cys)) is located at residues 110–172 (HDNEGLSYVS…QTLAFPAGIC (63 aa)). Residues N214, N257, N292, N321, N341, N415, N439, and N444 are each glycosylated (N-linked (GlcNAc...) asparagine).

The protein belongs to the oxygen-dependent FAD-linked oxidoreductase family. FAD serves as cofactor. The FAD cofactor is bound via a bicovalent 6-S-cysteinyl, 8alpha-N1-histidyl FAD linkage.

Its subcellular location is the endoplasmic reticulum. It is found in the cell membrane. The protein resides in the secreted. It localises to the cell wall. Flavin-dependent oxidoreductase involved in the biosynthetic pathway to 4-hydroxyindole-3-carbonyl nitrile (4-OH-ICN), a cyanogenic metabolite required for inducible pathogen defense. Converts indole cyanohydrin into indole-3-carbonyl nitrile (ICN). The chain is Berberine bridge enzyme-like 3 from Arabidopsis thaliana (Mouse-ear cress).